A 206-amino-acid polypeptide reads, in one-letter code: MELKVTTLEGKEAGSVQLSDEIFGLEPRSDIIQRCVIWQLAKRQAGTHKAKGRAEVWRTGKKMYKQKGTGGARHGSQRVPQFRGGGRAFGPVVRSHAIDLPKKVRVLALRHALSAKAKGGGLIVLDKAELEAAKTKTLVGHFSGLGLESALIIDGAEVNNGFAAAARNIPNIDVLPVQGINVYDILRRKKLVLTKAAVDALEARFK.

This sequence belongs to the universal ribosomal protein uL4 family. As to quaternary structure, part of the 50S ribosomal subunit.

In terms of biological role, one of the primary rRNA binding proteins, this protein initially binds near the 5'-end of the 23S rRNA. It is important during the early stages of 50S assembly. It makes multiple contacts with different domains of the 23S rRNA in the assembled 50S subunit and ribosome. Its function is as follows. Forms part of the polypeptide exit tunnel. The polypeptide is Large ribosomal subunit protein uL4 (Rhodopseudomonas palustris (strain ATCC BAA-98 / CGA009)).